A 570-amino-acid polypeptide reads, in one-letter code: MRFSAFFAPTLKEAPKDATLKSHEYLIRGGYIQQVGSGIYNFLPLGKRVMDKIRQVVKEEMDQAGAQEVMLGFVTPAELWRNSGRFEKYGKELLRFKDRKENDFVLGPTHEEMVVELAKGYVKSYKQLPLHLYQIHLKFRDEIRPRFGLMRGREFVMKDGYSFHANEADLIREFELMEATYKRIFTRLGLDFRVVEADSGAIGGSGSKEFMVLAQSGEDTIAVCDSCEYAANIEAAKRRAKKVDSPAPIASFSKFKTPEVKSIEALAEFFKVDPFYTLKVVVKKAFFDGGKSELAFFFLRGCDSLQETKACNAIGANELLDVSEEELIKAGLEPGFIGPYALKNLTGANHILFDLELKDAQGLIAGANERDHHFVGVNLGEFEGLIYKDLAEVGEGDGCPLCEGRLTYKKGIEVGHIFQLGTRYSEPLGANFLNPEGKSQPLVMGCYGIGVSRLLAAVIEQHHDEKGCIWTKSTAPFNLVIVVSNVKDPSQKAYAENLYNALQKEGIEVLLDDRDERYGSKMADFELLGIPYAVIVGKGLIEGQVELVNRANLQKGIVLADDILGRILEL.

Belongs to the class-II aminoacyl-tRNA synthetase family. ProS type 1 subfamily. In terms of assembly, homodimer.

Its subcellular location is the cytoplasm. It carries out the reaction tRNA(Pro) + L-proline + ATP = L-prolyl-tRNA(Pro) + AMP + diphosphate. Its function is as follows. Catalyzes the attachment of proline to tRNA(Pro) in a two-step reaction: proline is first activated by ATP to form Pro-AMP and then transferred to the acceptor end of tRNA(Pro). As ProRS can inadvertently accommodate and process non-cognate amino acids such as alanine and cysteine, to avoid such errors it has two additional distinct editing activities against alanine. One activity is designated as 'pretransfer' editing and involves the tRNA(Pro)-independent hydrolysis of activated Ala-AMP. The other activity is designated 'posttransfer' editing and involves deacylation of mischarged Ala-tRNA(Pro). The misacylated Cys-tRNA(Pro) is not edited by ProRS. This is Proline--tRNA ligase from Wolinella succinogenes (strain ATCC 29543 / DSM 1740 / CCUG 13145 / JCM 31913 / LMG 7466 / NCTC 11488 / FDC 602W) (Vibrio succinogenes).